We begin with the raw amino-acid sequence, 843 residues long: MLQSEKEFDYINIKLASPLRILQWSYRRLPNGQFIGEVQKSETINYRTFKPEMDGLFCERIFGPSRSFECACGKYKLIRYEGLICERCGVELTESRVRRHRMGHINLIYPVAHVWYTNSRPNYMALLLEVEQCEKNLNTSWQILRFSLPGIYDQVLRPILLSDHWPDSSIDEYLKTICKDFSTIALESSNIWAKKSKAWYQKIFEIYQELLYAKIETIYQFIEFIDNIDLTKQPTSVNFIFDYLENEKILDLMNPISLTNEITASQDPAQIDLVDPSRDIFLFLNTFPKKQHKELFRKLIRKSNTVKSLDDRIKRIKLASLAYFIAEDEISYYGLHWDLQQYRRSRELGFTAYPLKPEPKPKLQNRRYNTPKYLLRMTPTYLIGAVLIKKELEDLDIIKEIQRTRKFIVICSKILHKEKPIYHFLRWFRKWELQRAYKLRDQAIKRIRILENLLATGSNPAWMILTILPVIPPALRPMIQLEGGRFATSDLNELYRRIITRNNRLLRLLEIDAPQLIIRNEKRMLQEAVDTLIDNGKRGKIALSANNRPLKSLSDIIKGKHGRFRQNLLGKRVDYSGRSVIVVGPSLRLNECGLPYEMALELFQPFLIREMINQGLASNMKIARNLIEQNEAIIDPVLEKVLSNHPIFLNRAPTLHRLGIQAFEPILVQGRAIKLHPLVCSAFNADFDGDQMAVHIPLSLESQSECYMLMLAPYNFLSPANGEPIILPSQDMVLGCYYLTVSNIKGLLGSNQYFASLEDVLLAYNQDKIELHTAIWIRYTDNYIEPLNFKKQIQLNDASYIEIYENMQIRRDKDGNKIVQYLQTTTGRVIFNYTVQTTLNLLS.

Zn(2+) contacts are provided by Cys70, Cys72, Cys85, and Cys88. Residues Asp686, Asp688, and Asp690 each contribute to the Mg(2+) site.

This sequence belongs to the RNA polymerase beta' chain family. RpoC1 subfamily. In terms of assembly, in plastids the minimal PEP RNA polymerase catalytic core is composed of four subunits: alpha, beta, beta', and beta''. When a (nuclear-encoded) sigma factor is associated with the core the holoenzyme is formed, which can initiate transcription. The cofactor is Mg(2+). Zn(2+) is required as a cofactor.

The protein localises to the plastid. It is found in the chloroplast. It catalyses the reaction RNA(n) + a ribonucleoside 5'-triphosphate = RNA(n+1) + diphosphate. Functionally, DNA-dependent RNA polymerase catalyzes the transcription of DNA into RNA using the four ribonucleoside triphosphates as substrates. The protein is DNA-directed RNA polymerase subunit beta' of Trieres chinensis (Marine centric diatom).